The sequence spans 330 residues: GMP reductase (330 aa).

Residue Cys180 is the Thioimidate intermediate of the active site. 209-232 (LIADGGIRHNGDIAKSVRFGASMV) is a binding site for NADP(+).

It belongs to the IMPDH/GMPR family. GuaC type 2 subfamily.

It catalyses the reaction IMP + NH4(+) + NADP(+) = GMP + NADPH + 2 H(+). Catalyzes the irreversible NADPH-dependent deamination of GMP to IMP. It functions in the conversion of nucleobase, nucleoside and nucleotide derivatives of G to A nucleotides, and in maintaining the intracellular balance of A and G nucleotides. This is GMP reductase from Lactobacillus delbrueckii subsp. bulgaricus (strain ATCC 11842 / DSM 20081 / BCRC 10696 / JCM 1002 / NBRC 13953 / NCIMB 11778 / NCTC 12712 / WDCM 00102 / Lb 14).